The primary structure comprises 405 residues: S-arrestin (405 aa).

Position 234 is a phosphothreonine (Thr-234).

The protein belongs to the arrestin family. In terms of assembly, monomer. Homodimer. Homotetramer. Interacts with RHO (via the phosphorylated C-terminus).

It is found in the cell projection. The protein localises to the cilium. The protein resides in the photoreceptor outer segment. Its subcellular location is the membrane. Its function is as follows. Binds to photoactivated, phosphorylated RHO and terminates RHO signaling via G-proteins by competing with G-proteins for the same binding site on RHO. May play a role in preventing light-dependent degeneration of retinal photoreceptor cells. The polypeptide is S-arrestin (SAG) (Canis lupus familiaris (Dog)).